Here is a 69-residue protein sequence, read N- to C-terminus: UPF0437 protein AZC_3451 (69 aa).

It belongs to the UPF0437 family.

This chain is UPF0437 protein AZC_3451, found in Azorhizobium caulinodans (strain ATCC 43989 / DSM 5975 / JCM 20966 / LMG 6465 / NBRC 14845 / NCIMB 13405 / ORS 571).